The chain runs to 375 residues: Succinyl-diaminopimelate desuccinylase (375 aa).

Position 66 (His-66) interacts with Zn(2+). Residue Asp-68 is part of the active site. Asp-99 is a binding site for Zn(2+). Glu-133 functions as the Proton acceptor in the catalytic mechanism. Glu-134, Glu-162, and His-348 together coordinate Zn(2+).

Belongs to the peptidase M20A family. DapE subfamily. In terms of assembly, homodimer. Zn(2+) is required as a cofactor. Co(2+) serves as cofactor.

The catalysed reaction is N-succinyl-(2S,6S)-2,6-diaminopimelate + H2O = (2S,6S)-2,6-diaminopimelate + succinate. It functions in the pathway amino-acid biosynthesis; L-lysine biosynthesis via DAP pathway; LL-2,6-diaminopimelate from (S)-tetrahydrodipicolinate (succinylase route): step 3/3. Functionally, catalyzes the hydrolysis of N-succinyl-L,L-diaminopimelic acid (SDAP), forming succinate and LL-2,6-diaminopimelate (DAP), an intermediate involved in the bacterial biosynthesis of lysine and meso-diaminopimelic acid, an essential component of bacterial cell walls. This is Succinyl-diaminopimelate desuccinylase from Buchnera aphidicola subsp. Acyrthosiphon pisum (strain APS) (Acyrthosiphon pisum symbiotic bacterium).